We begin with the raw amino-acid sequence, 278 residues long: 4-diphosphocytidyl-2-C-methyl-D-erythritol kinase (278 aa).

Residue K9 is part of the active site. ATP is bound at residue 93 to 103 (PISAGLAGGSS). Residue D135 is part of the active site.

The protein belongs to the GHMP kinase family. IspE subfamily.

It carries out the reaction 4-CDP-2-C-methyl-D-erythritol + ATP = 4-CDP-2-C-methyl-D-erythritol 2-phosphate + ADP + H(+). Its pathway is isoprenoid biosynthesis; isopentenyl diphosphate biosynthesis via DXP pathway; isopentenyl diphosphate from 1-deoxy-D-xylulose 5-phosphate: step 3/6. Catalyzes the phosphorylation of the position 2 hydroxy group of 4-diphosphocytidyl-2C-methyl-D-erythritol. In Finegoldia magna (strain ATCC 29328 / DSM 20472 / WAL 2508) (Peptostreptococcus magnus), this protein is 4-diphosphocytidyl-2-C-methyl-D-erythritol kinase.